Here is a 278-residue protein sequence, read N- to C-terminus: Tryptophan synthase alpha chain (278 aa).

Residues E50 and D61 each act as proton acceptor in the active site.

This sequence belongs to the TrpA family. In terms of assembly, tetramer of two alpha and two beta chains.

It catalyses the reaction (1S,2R)-1-C-(indol-3-yl)glycerol 3-phosphate + L-serine = D-glyceraldehyde 3-phosphate + L-tryptophan + H2O. The protein operates within amino-acid biosynthesis; L-tryptophan biosynthesis; L-tryptophan from chorismate: step 5/5. Functionally, the alpha subunit is responsible for the aldol cleavage of indoleglycerol phosphate to indole and glyceraldehyde 3-phosphate. This is Tryptophan synthase alpha chain from Nitrobacter winogradskyi (strain ATCC 25391 / DSM 10237 / CIP 104748 / NCIMB 11846 / Nb-255).